The following is a 304-amino-acid chain: Ribosomal protein L11 methyltransferase (304 aa).

S-adenosyl-L-methionine contacts are provided by T156, G177, D199, and N240.

It belongs to the methyltransferase superfamily. PrmA family.

It is found in the cytoplasm. The catalysed reaction is L-lysyl-[protein] + 3 S-adenosyl-L-methionine = N(6),N(6),N(6)-trimethyl-L-lysyl-[protein] + 3 S-adenosyl-L-homocysteine + 3 H(+). Functionally, methylates ribosomal protein L11. This Symbiobacterium thermophilum (strain DSM 24528 / JCM 14929 / IAM 14863 / T) protein is Ribosomal protein L11 methyltransferase.